The primary structure comprises 333 residues: Transaldolase (333 aa).

Catalysis depends on Lys-135, which acts as the Schiff-base intermediate with substrate.

The protein belongs to the transaldolase family. Type 1 subfamily. As to quaternary structure, homodimer.

Its subcellular location is the cytoplasm. The enzyme catalyses D-sedoheptulose 7-phosphate + D-glyceraldehyde 3-phosphate = D-erythrose 4-phosphate + beta-D-fructose 6-phosphate. It participates in carbohydrate degradation; pentose phosphate pathway; D-glyceraldehyde 3-phosphate and beta-D-fructose 6-phosphate from D-ribose 5-phosphate and D-xylulose 5-phosphate (non-oxidative stage): step 2/3. Transaldolase is important for the balance of metabolites in the pentose-phosphate pathway. The sequence is that of Transaldolase from Prochlorococcus marinus (strain MIT 9301).